Here is a 444-residue protein sequence, read N- to C-terminus: Platelet-activating factor acetylhydrolase (444 aa).

An N-terminal signal peptide occupies residues 1-21 (MLPPKLHALFCLCSCLTLVHP). Residues Asn60 and Asn200 are each glycosylated (N-linked (GlcNAc...) asparagine). The Nucleophile role is filled by Ser274. Residues Asp297 and His352 each act as charge relay system in the active site. N-linked (GlcNAc...) asparagine glycosylation occurs at Asn424.

Belongs to the AB hydrolase superfamily. Lipase family. Post-translationally, N-glycosylated. In terms of tissue distribution, plasma.

The protein resides in the secreted. It localises to the extracellular space. The enzyme catalyses a 1-O-alkyl-2-acetyl-sn-glycero-3-phosphocholine + H2O = a 1-O-alkyl-sn-glycero-3-phosphocholine + acetate + H(+). It catalyses the reaction 1-O-decyl-2-acetyl-sn-glycero-3-phosphocholine + H2O = 1-O-decyl-sn-glycero-3-phosphocholine + acetate + H(+). It carries out the reaction 1-O-dodecyl-2-acetyl-sn-glycero-3-phosphocholine + H2O = 1-O-dodecyl-sn-glycero-3-phosphocholine + acetate + H(+). The catalysed reaction is 1-O-tetradecyl-2-acetyl-sn-glycero-3-phosphocholine + H2O = 1-O-tetradecyl-sn-glycero-3-phosphocholine + acetate + H(+). The enzyme catalyses 1-O-hexadecyl-2-acetyl-sn-glycero-3-phosphocholine + H2O = 1-O-hexadecyl-sn-glycero-3-phosphocholine + acetate + H(+). It catalyses the reaction 1-O-octadecyl-2-acetyl-sn-glycero-3-phosphocholine + H2O = 1-O-octadecyl-sn-glycero-3-phosphocholine + acetate + H(+). It carries out the reaction 1-hexadecanoyl-2-acetyl-sn-glycero-3-phosphocholine + H2O = 1-hexadecanoyl-sn-glycero-3-phosphocholine + acetate + H(+). The catalysed reaction is 1-hexadecanoyl-2-propionyl-sn-glycero-3-phosphocholine + H2O = propanoate + 1-hexadecanoyl-sn-glycero-3-phosphocholine + H(+). The enzyme catalyses 1-hexadecanoyl-2-butanoyl-sn-glycero-3-phosphocholine + H2O = butanoate + 1-hexadecanoyl-sn-glycero-3-phosphocholine + H(+). It catalyses the reaction 1-hexadecanoyl-2-pentanoyl-sn-glycero-3-phosphocholine + H2O = pentanoate + 1-hexadecanoyl-sn-glycero-3-phosphocholine + H(+). It carries out the reaction 1-hexadecanoyl-2-glutaroyl-sn-glycero-3-phosphocholine + H2O = glutarate + 1-hexadecanoyl-sn-glycero-3-phosphocholine + H(+). The catalysed reaction is 1-hexadecanoyl-2-(5-oxopentanoyl)-sn-glycero-3-phosphocholine + H2O = 5-oxopentanoate + 1-hexadecanoyl-sn-glycero-3-phosphocholine + H(+). The enzyme catalyses 1-hexadecanoyl-2-(9-oxononanoyl)-sn-glycero-3-phosphocholine + H2O = 9-oxononanoate + 1-hexadecanoyl-sn-glycero-3-phosphocholine + H(+). It catalyses the reaction 1-hexadecanoyl-2-[9-hydroperoxy-(10E-octadecenoyl)]-sn-glycero-3-phosphocholine + H2O = 9-hydroperoxy-10E-octadecenoate + 1-hexadecanoyl-sn-glycero-3-phosphocholine + H(+). It carries out the reaction 1-hexadecanoyl-2-(10-hydroperoxy-8E-octadecenoyl)-sn-glycero-3-phosphocholine + H2O = 10-hydroperoxy-(8E)-octadecenoate + 1-hexadecanoyl-sn-glycero-3-phosphocholine + H(+). Functionally, lipoprotein-associated calcium-independent phospholipase A2 involved in phospholipid catabolism during inflammatory and oxidative stress response. At the lipid-aqueous interface, hydrolyzes the ester bond of fatty acyl group attached at sn-2 position of phospholipids (phospholipase A2 activity). Specifically targets phospholipids with a short-chain fatty acyl group at sn-2 position. Can hydrolyze phospholipids with long fatty acyl chains, only if they carry oxidized functional groups. Hydrolyzes and inactivates platelet-activating factor (PAF, 1-O-alkyl-2-acetyl-sn-glycero-3-phosphocholine), a potent pro-inflammatory signaling lipid that acts through PTAFR on various innate immune cells. Hydrolyzes oxidatively truncated phospholipids carrying an aldehyde group at omega position, preventing their accumulation in low-density lipoprotein (LDL) particles and uncontrolled pro-inflammatory effects. As part of high-density lipoprotein (HDL) particles, can hydrolyze phospholipids having long-chain fatty acyl hydroperoxides at sn-2 position and protect against potential accumulation of these oxylipins in the vascular wall. Catalyzes the release from membrane phospholipids of F2-isoprostanes, lipid biomarkers of cellular oxidative damage. The protein is Platelet-activating factor acetylhydrolase (PLA2G7) of Canis lupus familiaris (Dog).